An 89-amino-acid polypeptide reads, in one-letter code: Elongation factor 1-beta (89 aa).

It belongs to the EF-1-beta/EF-1-delta family.

In terms of biological role, promotes the exchange of GDP for GTP in EF-1-alpha/GDP, thus allowing the regeneration of EF-1-alpha/GTP that could then be used to form the ternary complex EF-1-alpha/GTP/AAtRNA. The sequence is that of Elongation factor 1-beta (ef1b) from Methanocaldococcus jannaschii (strain ATCC 43067 / DSM 2661 / JAL-1 / JCM 10045 / NBRC 100440) (Methanococcus jannaschii).